Reading from the N-terminus, the 130-residue chain is MSGRGKQGGKARAKAKTRSSRAGLQFPVGRVHRLLRKGNYSERVGAGAPVYLAAVLEYLTAEILELAGNAARDNKKTRIIPRHLQLAIRNDEELNKLLGKVTIAQGGVLPNIQAVLLPKKTESHHKAKGK.

The disordered stretch occupies residues 1-22 (MSGRGKQGGKARAKAKTRSSRA). Ser2 is modified (N-acetylserine). Ser2 is subject to Phosphoserine; by RPS6KA5. Residue Arg4 is modified to Citrulline; alternate. A Symmetric dimethylarginine; by PRMT5; alternate modification is found at Arg4. Residues Lys6 and Lys10 each carry the N6-(2-hydroxyisobutyryl)lysine; alternate modification. At Lys6 the chain carries N6-acetyllysine; alternate. Basic residues predominate over residues 7-19 (QGGKARAKAKTRS). N6-(beta-hydroxybutyryl)lysine; alternate is present on residues Lys10 and Lys14. Lys10 is modified (N6-lactoyllysine; alternate). Lys10 bears the N6-succinyllysine; alternate mark. Lys14 participates in a covalent cross-link: Glycyl lysine isopeptide (Lys-Gly) (interchain with G-Cter in ubiquitin); alternate. Lys16 is covalently cross-linked (Glycyl lysine isopeptide (Lys-Gly) (interchain with G-Cter in ubiquitin)). Residue Lys37 is modified to N6-(2-hydroxyisobutyryl)lysine; alternate. Position 37 is an N6-(beta-hydroxybutyryl)lysine; alternate (Lys37). Lys37 is subject to N6-crotonyllysine; alternate. An N6-(2-hydroxyisobutyryl)lysine mark is found at Lys75 and Lys76. Lys96 is subject to N6-(2-hydroxyisobutyryl)lysine; alternate. Position 96 is an N6-(beta-hydroxybutyryl)lysine; alternate (Lys96). Lys96 is subject to N6-succinyllysine; alternate. The residue at position 96 (Lys96) is an N6-glutaryllysine; alternate. Residue Lys100 is modified to N6-glutaryllysine. Position 105 is an N5-methylglutamine (Gln105). Lys119 is modified (N6-(2-hydroxyisobutyryl)lysine; alternate). Position 119 is an N6-(beta-hydroxybutyryl)lysine; alternate (Lys119). N6-crotonyllysine; alternate is present on residues Lys119 and Lys120. Lys119 and Lys120 each carry N6-glutaryllysine; alternate. Lys120 is covalently cross-linked (Glycyl lysine isopeptide (Lys-Gly) (interchain with G-Cter in ubiquitin); alternate). Position 121 is a phosphothreonine; by DCAF1 (Thr121). Residue Lys126 is modified to N6-crotonyllysine; alternate. Lys126 carries the post-translational modification N6-glutaryllysine; alternate.

Belongs to the histone H2A family. In terms of assembly, the nucleosome is a histone octamer containing two molecules each of H2A, H2B, H3 and H4 assembled in one H3-H4 heterotetramer and two H2A-H2B heterodimers. The octamer wraps approximately 147 bp of DNA. Post-translationally, deiminated on Arg-4 in granulocytes upon calcium entry. Monoubiquitination of Lys-120 (H2AK119Ub) by RING1, TRIM37 and RNF2/RING2 complex gives a specific tag for epigenetic transcriptional repression and participates in X chromosome inactivation of female mammals. It is involved in the initiation of both imprinted and random X inactivation. Ubiquitinated H2A is enriched in inactive X chromosome chromatin. Ubiquitination of H2A functions downstream of methylation of 'Lys-27' of histone H3 (H3K27me). H2AK119Ub by RNF2/RING2 can also be induced by ultraviolet and may be involved in DNA repair. Monoubiquitination of Lys-120 (H2AK119Ub) by TRIM37 may promote transformation of cells in a number of breast cancers. Following DNA double-strand breaks (DSBs), it is ubiquitinated through 'Lys-63' linkage of ubiquitin moieties by the E2 ligase UBE2N and the E3 ligases RNF8 and RNF168, leading to the recruitment of repair proteins to sites of DNA damage. Ubiquitination at Lys-14 and Lys-16 (H2AK13Ub and H2AK15Ub, respectively) in response to DNA damage is initiated by RNF168 that mediates monoubiquitination at these 2 sites, and 'Lys-63'-linked ubiquitin are then conjugated to monoubiquitin; RNF8 is able to extend 'Lys-63'-linked ubiquitin chains in vitro. Deubiquitinated by USP51 at Lys-14 and Lys-16 (H2AK13Ub and H2AK15Ub, respectively) after damaged DNA is repaired. H2AK119Ub and ionizing radiation-induced 'Lys-63'-linked ubiquitination (H2AK13Ub and H2AK15Ub) are distinct events. In terms of processing, phosphorylation on Ser-2 (H2AS1ph) is enhanced during mitosis. Phosphorylation on Ser-2 by RPS6KA5/MSK1 directly represses transcription. Acetylation of H3 inhibits Ser-2 phosphorylation by RPS6KA5/MSK1. Phosphorylation at Thr-121 (H2AT120ph) by DCAF1 is present in the regulatory region of many tumor suppresor genes and down-regulates their transcription. Post-translationally, glutamine methylation at Gln-105 (H2AQ104me) by FBL is specifically dedicated to polymerase I. It is present at 35S ribosomal DNA locus and impairs binding of the FACT complex. Symmetric dimethylation on Arg-4 by the PRDM1/PRMT5 complex may play a crucial role in the germ-cell lineage. In terms of processing, crotonylation (Kcr) is specifically present in male germ cells and marks testis-specific genes in post-meiotic cells, including X-linked genes that escape sex chromosome inactivation in haploid cells. Crotonylation marks active promoters and enhancers and confers resistance to transcriptional repressors. It is also associated with post-meiotically activated genes on autosomes. Post-translationally, lactylated in macrophages by EP300/P300 by using lactoyl-CoA directly derived from endogenous or exogenous lactate, leading to stimulates gene transcription.

The protein localises to the nucleus. It is found in the chromosome. In terms of biological role, core component of nucleosome. Nucleosomes wrap and compact DNA into chromatin, limiting DNA accessibility to the cellular machineries which require DNA as a template. Histones thereby play a central role in transcription regulation, DNA repair, DNA replication and chromosomal stability. DNA accessibility is regulated via a complex set of post-translational modifications of histones, also called histone code, and nucleosome remodeling. In Homo sapiens (Human), this protein is Histone H2A type 1-D.